Here is a 421-residue protein sequence, read N- to C-terminus: Tubulin gamma-3 chain (421 aa).

Residue 94–100 (AGGTGSG) participates in GTP binding.

It belongs to the tubulin family.

Its subcellular location is the cytoplasm. It localises to the cytoskeleton. The protein localises to the microtubule organizing center. Tubulin is the major constituent of microtubules. The gamma chain is found at microtubule organizing centers (MTOC) such as the spindle poles, suggesting that it is involved in the minus-end nucleation of microtubule assembly. This is Tubulin gamma-3 chain (TUBG3) from Zea mays (Maize).